The chain runs to 595 residues: S-(+)-linalool synthase, chloroplastic (595 aa).

The N-terminal 46 residues, 1-46, are a transit peptide targeting the chloroplast; that stretch reads MVCHVFSSFSSSLIRVLEAPLLLPAASASSSSSSSPASRSGGRRRR. A compositionally biased stretch (low complexity) spans 27 to 40; sequence SASSSSSSSPASRS. Residues 27 to 54 form a disordered region; it reads SASSSSSSSPASRSGGRRRRAAHVRPSP. Arg-309, Asp-346, Asp-350, Arg-487, and Asp-490 together coordinate (2E)-geranyl diphosphate. Mg(2+) is bound by residues Asp-346 and Asp-350. The short motif at 346–350 is the DDXXD motif element; the sequence is DDIFD. Mg(2+) contacts are provided by Asp-490, Ser-494, and Glu-498.

It belongs to the terpene synthase family. Tpsb subfamily. Mg(2+) serves as cofactor. Mn(2+) is required as a cofactor.

Its subcellular location is the plastid. It is found in the chloroplast. It carries out the reaction (2E)-geranyl diphosphate + H2O = (S)-linalool + diphosphate. It functions in the pathway secondary metabolite biosynthesis; terpenoid biosynthesis. Its function is as follows. Involved in monoterpene (C10) biosynthesis. The major product is S-(+)-linalool. Linalool production is induced by jasmonate in response to pathogen attack, it possesses antibacterial activity and is important for resistance to the bacterial blight pathogen Xanthomonas oryzae pv. oryzae (Xoo). Plants over-expressing linalool synthase display enhanced resistance to Xoo. This chain is S-(+)-linalool synthase, chloroplastic, found in Oryza sativa subsp. japonica (Rice).